A 171-amino-acid polypeptide reads, in one-letter code: Putative phosphoesterase ABC1741 (171 aa).

The Proton donor role is filled by H34. Short sequence motifs (HXTX) lie at residues H34 to L37 and H116 to I119. H116 (proton acceptor) is an active-site residue.

It belongs to the 2H phosphoesterase superfamily. YjcG family.

In Shouchella clausii (strain KSM-K16) (Alkalihalobacillus clausii), this protein is Putative phosphoesterase ABC1741.